The sequence spans 134 residues: Large-conductance mechanosensitive channel (134 aa).

Transmembrane regions (helical) follow at residues 15–35 and 80–100; these read IDLA…QSVV and GNFI…FLAV.

The protein belongs to the MscL family. As to quaternary structure, homopentamer.

The protein resides in the cell inner membrane. In terms of biological role, channel that opens in response to stretch forces in the membrane lipid bilayer. May participate in the regulation of osmotic pressure changes within the cell. This Methylocella silvestris (strain DSM 15510 / CIP 108128 / LMG 27833 / NCIMB 13906 / BL2) protein is Large-conductance mechanosensitive channel.